Consider the following 98-residue polypeptide: NADH-ubiquinone oxidoreductase chain 4L (98 aa).

Transmembrane regions (helical) follow at residues 1–21 (MSMV…GLLM), 29–49 (SLLC…ATIL), and 61–81 (IILL…LVTV).

Belongs to the complex I subunit 4L family. As to quaternary structure, core subunit of respiratory chain NADH dehydrogenase (Complex I) which is composed of 45 different subunits.

Its subcellular location is the mitochondrion inner membrane. It carries out the reaction a ubiquinone + NADH + 5 H(+)(in) = a ubiquinol + NAD(+) + 4 H(+)(out). Core subunit of the mitochondrial membrane respiratory chain NADH dehydrogenase (Complex I) which catalyzes electron transfer from NADH through the respiratory chain, using ubiquinone as an electron acceptor. Part of the enzyme membrane arm which is embedded in the lipid bilayer and involved in proton translocation. In Pusa caspica (Caspian seal), this protein is NADH-ubiquinone oxidoreductase chain 4L (MT-ND4L).